The following is a 511-amino-acid chain: GMP synthase [glutamine-hydrolyzing] (511 aa).

One can recognise a Glutamine amidotransferase type-1 domain in the interval Ile5–Asp195. Catalysis depends on Cys82, which acts as the Nucleophile. Catalysis depends on residues His169 and Glu171. A GMPS ATP-PPase domain is found at Trp196–Arg386. Ser223–Ser229 serves as a coordination point for ATP.

In terms of assembly, homodimer.

It catalyses the reaction XMP + L-glutamine + ATP + H2O = GMP + L-glutamate + AMP + diphosphate + 2 H(+). Its pathway is purine metabolism; GMP biosynthesis; GMP from XMP (L-Gln route): step 1/1. Its function is as follows. Catalyzes the synthesis of GMP from XMP. The protein is GMP synthase [glutamine-hydrolyzing] of Caldicellulosiruptor saccharolyticus (strain ATCC 43494 / DSM 8903 / Tp8T 6331).